The sequence spans 178 residues: Crossover junction endodeoxyribonuclease RuvC (178 aa).

Active-site residues include Asp7, Glu67, and Asp139. Asp7, Glu67, and Asp139 together coordinate Mg(2+).

The protein belongs to the RuvC family. As to quaternary structure, homodimer which binds Holliday junction (HJ) DNA. The HJ becomes 2-fold symmetrical on binding to RuvC with unstacked arms; it has a different conformation from HJ DNA in complex with RuvA. In the full resolvosome a probable DNA-RuvA(4)-RuvB(12)-RuvC(2) complex forms which resolves the HJ. The cofactor is Mg(2+).

The protein resides in the cytoplasm. The catalysed reaction is Endonucleolytic cleavage at a junction such as a reciprocal single-stranded crossover between two homologous DNA duplexes (Holliday junction).. The RuvA-RuvB-RuvC complex processes Holliday junction (HJ) DNA during genetic recombination and DNA repair. Endonuclease that resolves HJ intermediates. Cleaves cruciform DNA by making single-stranded nicks across the HJ at symmetrical positions within the homologous arms, yielding a 5'-phosphate and a 3'-hydroxyl group; requires a central core of homology in the junction. The consensus cleavage sequence is 5'-(A/T)TT(C/G)-3'. Cleavage occurs on the 3'-side of the TT dinucleotide at the point of strand exchange. HJ branch migration catalyzed by RuvA-RuvB allows RuvC to scan DNA until it finds its consensus sequence, where it cleaves and resolves the cruciform DNA. This Trichlorobacter lovleyi (strain ATCC BAA-1151 / DSM 17278 / SZ) (Geobacter lovleyi) protein is Crossover junction endodeoxyribonuclease RuvC.